A 155-amino-acid polypeptide reads, in one-letter code: Protein archease-like (155 aa).

The Ca(2+) site is built by D26, D154, and I155.

This sequence belongs to the archease family.

Its function is as follows. Component of the tRNA-splicing ligase complex required to facilitate the enzymatic turnover of catalytic subunit RtcB. The polypeptide is Protein archease-like (Caenorhabditis briggsae).